A 251-amino-acid chain; its full sequence is MTTSRCSHLPEVLPDCTSSAPSGKTVEDCSSLVNGQPQYVMQVSAKDGQLLSTVVRTLTTQSFNDRPMCRICHEGSTQEDLLSPCECTGTLGTIHRSCLEHWLSSSNTSYCELCHFRFSVERKPRPLVEWLRNPGPQHEKRTLFGDMVCFLFITPLATISGWLCLRGAVDHLHFSSRLEAVGLIALTVALFTIYLFWTLVSFRYHCRLYNEWRRTNQRVILVIPKSANLPSAQQSLLGLHSFKRNSKETIV.

Residues 61-121 form an RING-CH-type zinc finger; that stretch reads QSFNDRPMCR…ELCHFRFSVE (61 aa). Residues Cys69, Cys72, Cys85, Cys87, His95, Cys98, Cys111, and Cys114 each coordinate Zn(2+). A run of 2 helical transmembrane segments spans residues 143-163 and 180-200; these read LFGD…SGWL and AVGL…WTLV.

It localises to the cytoplasmic vesicle membrane. It is found in the early endosome membrane. The catalysed reaction is S-ubiquitinyl-[E2 ubiquitin-conjugating enzyme]-L-cysteine + [acceptor protein]-L-lysine = [E2 ubiquitin-conjugating enzyme]-L-cysteine + N(6)-ubiquitinyl-[acceptor protein]-L-lysine.. It participates in protein modification; protein ubiquitination. Functionally, E3 ubiquitin-protein ligase which may be involved in endosomal trafficking. E3 ubiquitin ligases accept ubiquitin from an E2 ubiquitin-conjugating enzyme in the form of a thioester and then directly transfer the ubiquitin to targeted substrates. The protein is E3 ubiquitin-protein ligase MARCHF3 (marchf3) of Xenopus tropicalis (Western clawed frog).